Here is a 193-residue protein sequence, read N- to C-terminus: Probable chorismate pyruvate-lyase (193 aa).

Positions 81, 119, and 177 each coordinate substrate.

This sequence belongs to the UbiC family.

It localises to the cytoplasm. It carries out the reaction chorismate = 4-hydroxybenzoate + pyruvate. It participates in cofactor biosynthesis; ubiquinone biosynthesis. Removes the pyruvyl group from chorismate, with concomitant aromatization of the ring, to provide 4-hydroxybenzoate (4HB) for the ubiquinone pathway. This Idiomarina loihiensis (strain ATCC BAA-735 / DSM 15497 / L2-TR) protein is Probable chorismate pyruvate-lyase.